Consider the following 498-residue polypeptide: Probable cytosol aminopeptidase (498 aa).

Mn(2+)-binding residues include K263 and D268. K275 is an active-site residue. Mn(2+) contacts are provided by D286, D345, and E347. The active site involves R349.

Belongs to the peptidase M17 family. It depends on Mn(2+) as a cofactor.

The protein resides in the cytoplasm. The catalysed reaction is Release of an N-terminal amino acid, Xaa-|-Yaa-, in which Xaa is preferably Leu, but may be other amino acids including Pro although not Arg or Lys, and Yaa may be Pro. Amino acid amides and methyl esters are also readily hydrolyzed, but rates on arylamides are exceedingly low.. The enzyme catalyses Release of an N-terminal amino acid, preferentially leucine, but not glutamic or aspartic acids.. Presumably involved in the processing and regular turnover of intracellular proteins. Catalyzes the removal of unsubstituted N-terminal amino acids from various peptides. The sequence is that of Probable cytosol aminopeptidase from Rhodopseudomonas palustris (strain BisA53).